Consider the following 299-residue polypeptide: Protein U23 (299 aa).

A signal peptide spans 1 to 27 (MRKSEFNAKSCFLMIGICVFNLNSSSC). The chain crosses the membrane as a helical span at residues 247 to 267 (LVIWICGISFVGAFIIVIVIL).

Its subcellular location is the host membrane. The protein is Protein U23 (U23) of Human herpesvirus 6B (strain Z29) (HHV-6 variant B).